The primary structure comprises 521 residues: Bifunctional purine biosynthesis protein PurH (521 aa).

One can recognise an MGS-like domain in the interval M1 to C145.

The protein belongs to the PurH family.

It catalyses the reaction (6R)-10-formyltetrahydrofolate + 5-amino-1-(5-phospho-beta-D-ribosyl)imidazole-4-carboxamide = 5-formamido-1-(5-phospho-D-ribosyl)imidazole-4-carboxamide + (6S)-5,6,7,8-tetrahydrofolate. It carries out the reaction IMP + H2O = 5-formamido-1-(5-phospho-D-ribosyl)imidazole-4-carboxamide. It participates in purine metabolism; IMP biosynthesis via de novo pathway; 5-formamido-1-(5-phospho-D-ribosyl)imidazole-4-carboxamide from 5-amino-1-(5-phospho-D-ribosyl)imidazole-4-carboxamide (10-formyl THF route): step 1/1. Its pathway is purine metabolism; IMP biosynthesis via de novo pathway; IMP from 5-formamido-1-(5-phospho-D-ribosyl)imidazole-4-carboxamide: step 1/1. This chain is Bifunctional purine biosynthesis protein PurH, found in Janthinobacterium sp. (strain Marseille) (Minibacterium massiliensis).